Consider the following 421-residue polypeptide: Probable sugar-binding periplasmic protein (421 aa).

Positions 1–27 (MHKLLKLAAMGTAACALLAGMAPVANA) are cleaved as a signal peptide.

The protein belongs to the bacterial solute-binding protein 1 family.

Its subcellular location is the periplasm. Part of a binding-protein-dependent transport system for a sugar. The sequence is that of Probable sugar-binding periplasmic protein from Brucella suis biovar 1 (strain 1330).